The sequence spans 394 residues: Fatty acid resistance protein FarA (394 aa).

The tract at residues 1–23 is disordered; that stretch reads MKSGNSEPNLMETHTDETKLQNT. The helical transmembrane segment at 33-53 threads the bilayer; sequence ALTLLFALSAAAAGSAFFLWW. Residues 356–376 form a disordered region; the sequence is SAAGAPVSKTPGAALPEMEST.

Belongs to the membrane fusion protein (MFP) (TC 8.A.1) family. In terms of assembly, probably part of a tripartite efflux system FarAB-MtrE, which is composed of an inner membrane transporter, FarB, a periplasmic membrane fusion protein, FarA, and an outer membrane component, MtrE.

It localises to the cell inner membrane. Mediates resistance to long-chained antibacterial fatty acids (FAs). Function is dependent on the MtrE outer membrane protein. The sequence is that of Fatty acid resistance protein FarA from Neisseria gonorrhoeae.